The following is a 103-amino-acid chain: Integration host factor subunit alpha (103 aa).

The protein belongs to the bacterial histone-like protein family. As to quaternary structure, heterodimer of an alpha and a beta chain.

Functionally, this protein is one of the two subunits of integration host factor, a specific DNA-binding protein that functions in genetic recombination as well as in transcriptional and translational control. This Bartonella bacilliformis (strain ATCC 35685 / KC583 / Herrer 020/F12,63) protein is Integration host factor subunit alpha.